Reading from the N-terminus, the 156-residue chain is Ribosome maturation factor RimP (156 aa).

It belongs to the RimP family.

The protein resides in the cytoplasm. Its function is as follows. Required for maturation of 30S ribosomal subunits. This Prochlorococcus marinus (strain NATL2A) protein is Ribosome maturation factor RimP.